Here is a 429-residue protein sequence, read N- to C-terminus: MDQNTLIKTAQQILDTTTELSKHLAESDIAIPNDLNVGTTSGLWTTHNAEIEALRLKITGLSQNLGMLLEGPHGFLHEYVSVNWEHGALYTLLDHNVLEQIPLDGSKIAIADLATRVGLPADKLLRICRLVATVGIIREDTEGEFSHTAISETLVKDQGYKSFIGFQTFETRVASAHLADSLRKPNPYWNEGQAAFELAWGMPMYDWHREHPEKGKRFAQAMQSVSKNLDAGNDMIIQWVKGSEGLQNGKPLHVVEIQGKTGAFSAELATLYPNAEFEVQDTSADLISRGKQTLDPELASRVKFSQRDLFAVRKCDEVSDFTDNTVVFLLRGVLWNHSDEEVITLLRSFLPAMEHGIKPIVLISDLVSPIWATFESHVERAFRRRDVTLTTMHNVKQRTSTEWSQLLQSADPNFKVCAFPVDLFGIFEN.

D285 contributes to the S-adenosyl-L-methionine binding site.

This sequence belongs to the class I-like SAM-binding methyltransferase superfamily. Cation-independent O-methyltransferase family. COMT subfamily.

It catalyses the reaction (2'R)-atrovenetin + S-adenosyl-L-methionine = deoxyherqueinone + S-adenosyl-L-homocysteine + H(+). It participates in secondary metabolite biosynthesis. Functionally, O-methyltransferase; part of the gene cluster that mediates the biosynthesis of phenalenones such as herqueinone, compounds that have been reported to treat tumors, bacterial infections and/or mycoses, and rheumatic diseases. The non-reducing polyketide synthase phnA synthesizes the heptaketide backbone and cyclizes it into the angular, hemiketal-containing naphtho-gamma-pyrone prephenalenone. The product template (PT) domain of phnA catalyzes only the C4-C9 aldol condensation, which is unprecedented among known PT domains. The transformation of prephenalenone to phenalenones requires an FAD-dependent monooxygenase phnB, which catalyzes the C2 aromatic hydroxylation of prephenalenone and ring opening of the gamma-pyrone ring simultaneously. Subsequent intramolecular deprotonation of C3 phenolic oxygen accelerates phenalenone ring closure to yield the tricyclic phenalenone core with a C2 hydroxylation. The prenyltransferase phnF further catalyzes reverse C-prenylation of phenalenone by direct electrophilic substitution at C6, or possibly via first a forward O-prenylation of a neighboring phenol in phenalenone, followed by a Claisen rearrangement. The hydroalkoxylation enzyme phnH catalyzes the 5-exo-trig cyclization via acid catalysis after the spontaneous deprotonation of 7-OH, which leads to the formation of the dihydrobenzofuran atrovenetin. Atrovenetin is further converted to deoxyherqueinone by the O-methyltransferase phnC which can methylate C2-OH to stabilize the northern portion of the phenalenone core. Finally, the oxidoreductase phnG converts deoxyherqueinone to herqueinone via C6 hydroxylation. This chain is O-methyltransferase phnC, found in Penicillium herquei.